Reading from the N-terminus, the 60-residue chain is Large ribosomal subunit protein uL30 (60 aa).

It belongs to the universal ribosomal protein uL30 family. In terms of assembly, part of the 50S ribosomal subunit.

The polypeptide is Large ribosomal subunit protein uL30 (Sphingopyxis alaskensis (strain DSM 13593 / LMG 18877 / RB2256) (Sphingomonas alaskensis)).